A 298-amino-acid polypeptide reads, in one-letter code: Aspartate carbamoyltransferase catalytic subunit (298 aa).

Carbamoyl phosphate is bound by residues arginine 50 and threonine 51. Lysine 79 lines the L-aspartate pocket. Carbamoyl phosphate contacts are provided by arginine 100, histidine 128, and glutamine 131. L-aspartate contacts are provided by arginine 160 and arginine 221. Carbamoyl phosphate-binding residues include leucine 260 and proline 261.

This sequence belongs to the aspartate/ornithine carbamoyltransferase superfamily. ATCase family. As to quaternary structure, heterooligomer of catalytic and regulatory chains.

The catalysed reaction is carbamoyl phosphate + L-aspartate = N-carbamoyl-L-aspartate + phosphate + H(+). It participates in pyrimidine metabolism; UMP biosynthesis via de novo pathway; (S)-dihydroorotate from bicarbonate: step 2/3. Its function is as follows. Catalyzes the condensation of carbamoyl phosphate and aspartate to form carbamoyl aspartate and inorganic phosphate, the committed step in the de novo pyrimidine nucleotide biosynthesis pathway. The protein is Aspartate carbamoyltransferase catalytic subunit of Methanosphaerula palustris (strain ATCC BAA-1556 / DSM 19958 / E1-9c).